The sequence spans 185 residues: Ribosome-recycling factor (185 aa).

This sequence belongs to the RRF family.

It localises to the cytoplasm. Functionally, responsible for the release of ribosomes from messenger RNA at the termination of protein biosynthesis. May increase the efficiency of translation by recycling ribosomes from one round of translation to another. The polypeptide is Ribosome-recycling factor (Shewanella oneidensis (strain ATCC 700550 / JCM 31522 / CIP 106686 / LMG 19005 / NCIMB 14063 / MR-1)).